The sequence spans 399 residues: MIGISKLYCGTVEPSDALRYGRDSKKLPSHLLQFSKDKKPVVVWNMTRRCNLKCVHCYAQAKDIEFENELSTEEGKALIDDLASFGSPVILFSGGEPTMRKDLPELAAYAREKGMRAVISTNGTLIDREMAKKLKEVGLSYVGVSLDGIRETNDKFRGMKGAFDAALRGLHNCQEEGIKVGLRFTINKQNVRDIPAIFDLLEEEKIPRICFYHLVYAGRGSKMVNEDLSLEESRQAVDLILERTRKLHEKGFPAEVLTVDNHCDGPYLYMKLLKENPERAAEVFELLSMNQGNSSGIGIGCVSWDGAVHADQFWRHYSFGNVRERPFSEIWTDLSDELMAGLKNRKPLIKAHADRCARCKWLDVCNGNFRVRAEAVYGNVWADDPACYLTKEEIGYYEA.

The 218-residue stretch at 36 to 253 (KDKKPVVVWN…TRKLHEKGFP (218 aa)) folds into the Radical SAM core domain. The [4Fe-4S] cluster site is built by Cys50, Cys54, and Cys57.

This sequence belongs to the radical SAM superfamily. The cofactor is [4Fe-4S] cluster.

The enzyme catalyses 12,18-didecarboxysiroheme + 2 AH2 + 2 S-adenosyl-L-methionine = Fe-coproporphyrin III + 2 5'-deoxyadenosine + 2 L-methionine + 2 acetate + 2 A + 2 H(+). It functions in the pathway porphyrin-containing compound metabolism; protoheme biosynthesis. Involved in siroheme-dependent heme b biosynthesis. Catalyzes the conversion of didecarboxysiroheme into Fe-coproporphyrin III by oxidative loss of two acetic acid side chains. The polypeptide is Fe-coproporphyrin III synthase (Methanosarcina barkeri (strain Fusaro / DSM 804)).